The following is an 82-amino-acid chain: Three-finger toxin MALT0063C (82 aa).

An N-terminal signal peptide occupies residues 1–21; sequence MRTLLLTLVVVTIVCLDLGNS. Intrachain disulfides connect cysteine 24/cysteine 42, cysteine 35/cysteine 60, cysteine 64/cysteine 72, and cysteine 73/cysteine 78.

This sequence belongs to the three-finger toxin family. Short-chain subfamily. Expressed by the venom gland.

It is found in the secreted. The chain is Three-finger toxin MALT0063C from Micrurus altirostris (Uruguayan coral snake).